The following is a 125-amino-acid chain: Small ribosomal subunit protein uS17 (125 aa).

Disordered regions lie at residues 1–21 (MSSSPAQRHTRKTQIGFVSSR) and 101–125 (VAAQVPTKTTASNTPAPAEQPAPQA).

The protein belongs to the universal ribosomal protein uS17 family. In terms of assembly, part of the 30S ribosomal subunit.

Its function is as follows. One of the primary rRNA binding proteins, it binds specifically to the 5'-end of 16S ribosomal RNA. The polypeptide is Small ribosomal subunit protein uS17 (Opitutus terrae (strain DSM 11246 / JCM 15787 / PB90-1)).